The sequence spans 250 residues: Doublesex- and mab-3-related transcription factor dmd-3 (250 aa).

Positions Cys19–Arg68 form a DNA-binding region, DM 1. Residues Cys90–Ser100 are compositionally biased toward polar residues. The tract at residues Cys90–Pro115 is disordered. Residues Gly102–Pro115 show a composition bias toward basic and acidic residues. Residues Cys117–Arg164 constitute a DNA-binding region (DM 2). The disordered stretch occupies residues Gln166–Ser201. Over residues Glu169–Pro180 the composition is skewed to basic and acidic residues. Residues Thr186–Ser201 are compositionally biased toward low complexity.

The protein belongs to the DMRT family. In terms of tissue distribution, in males, expressed in the tail tip. Specifically, expressed in 15 male-specific muscles of the tail tip called the diagonal muscles, and also in core body muscles of both males and hermaphrodites. In males, expressed in ray A-neurons. In males, expressed in PHC sensory neurons. In males, it is also expressed in the hindgut, B lineage and somatic gonad. In hermaphrodites, expressed in the anchor cell only.

It is found in the nucleus. The protein resides in the perikaryon. Functionally, transcriptional activator which promotes male-specific development. Acts partially redundantly with the transcription factor mab-3 to coordinate tail tip cell fusion and retraction and thereby regulate male tail tip morphogenesis. This is most likely through the regulation of downstream effectors such as eff-1. May also negatively regulate the expression of other proteins implicated in male tail morphogenesis including nhr-25, vav-1 and arl-1 in tail tip cells. In males, plays a role in the development of ray A-neurons by negatively regulating the activity of the transcription factor ast-1. Plays a role in the male-specific differentiation of PHC sensory neurons into densely connected hub sensory neurons. Plays a role in male mating behavior. The protein is Doublesex- and mab-3-related transcription factor dmd-3 of Caenorhabditis elegans.